The sequence spans 144 residues: Ig heavy chain V region M167 (144 aa).

A signal peptide spans 1–19 (MKMWLNWVFLLTLLHGIQC). An Ig-like domain is found at 20 to 133 (EVKVVESGGG…GNSYFGYFDV (114 aa)).

This is Ig heavy chain V region M167 from Mus musculus (Mouse).